Consider the following 97-residue polypeptide: NADH-ubiquinone oxidoreductase chain 4L (97 aa).

3 helical membrane passes run 1–21 (MALL…ILLN), 25–45 (FLSI…GIAI), and 60–80 (LFVL…MVGL).

It belongs to the complex I subunit 4L family.

The protein resides in the mitochondrion membrane. It carries out the reaction a ubiquinone + NADH + 5 H(+)(in) = a ubiquinol + NAD(+) + 4 H(+)(out). Functionally, core subunit of the mitochondrial membrane respiratory chain NADH dehydrogenase (Complex I) that is believed to belong to the minimal assembly required for catalysis. Complex I functions in the transfer of electrons from NADH to the respiratory chain. The immediate electron acceptor for the enzyme is believed to be ubiquinone. The chain is NADH-ubiquinone oxidoreductase chain 4L (ND4L) from Strongylocentrotus purpuratus (Purple sea urchin).